The following is a 374-amino-acid chain: ATPase ASNA1 homolog (374 aa).

Lysine 44 to threonine 51 lines the ATP pocket. The active site involves aspartate 73. Positions 244 and 271 each coordinate ATP.

This sequence belongs to the arsA ATPase family. As to quaternary structure, homodimer.

The protein localises to the cytoplasm. Its subcellular location is the endoplasmic reticulum. Its function is as follows. ATPase required for the post-translational delivery of tail-anchored (TA) proteins to the endoplasmic reticulum. Recognizes and selectively binds the transmembrane domain of TA proteins in the cytosol. This complex then targets to the endoplasmic reticulum by membrane-bound receptors, where the tail-anchored protein is released for insertion. This process is regulated by ATP binding and hydrolysis. ATP binding drives the homodimer towards the closed dimer state, facilitating recognition of newly synthesized TA membrane proteins. ATP hydrolysis is required for insertion. Subsequently, the homodimer reverts towards the open dimer state, lowering its affinity for the membrane-bound receptor, and returning it to the cytosol to initiate a new round of targeting. This chain is ATPase ASNA1 homolog, found in Plasmodium vivax (strain Salvador I).